Here is a 376-residue protein sequence, read N- to C-terminus: Beta-centractin (376 aa).

The residue at position 1 (Met-1) is an N-acetylmethionine. Tyr-4 is modified (3'-nitrotyrosine).

The protein belongs to the actin family. ARP1 subfamily.

It is found in the cytoplasm. It localises to the cytoskeleton. Its subcellular location is the microtubule organizing center. The protein resides in the centrosome. Its function is as follows. Component of a multi-subunit complex involved in microtubule based vesicle motility. It is associated with the centrosome. The chain is Beta-centractin (Actr1b) from Mus musculus (Mouse).